The primary structure comprises 301 residues: Galectin-6 (301 aa).

2 Galectin domains span residues 19-149 (YKRP…INFF) and 173-301 (YVGA…YVHI).

This Mus musculus (Mouse) protein is Galectin-6 (Lgals6).